The following is a 502-amino-acid chain: MNMSCKFEIVLLVSWWLLLVLVFGVESSMFSEFDRLDFPKHFIFGASSCAYQVEGAAFEDGRTLSTFDIAAHSGHLPGNGDITSDEYHKYKEDVELMVETGLDAYRFSISWSRLIPNGRGPVNPKGLEYYNNLVNALLTKGTQPHVTLLHSDLPQALRDEYGGLFISPKFIDDFVAYADVCFREFGDRVLHWTTFNEANFLAFGDENTPASALYLSAHHLLLAHASATRLYRENYQASQRGFIGINVYAYDFIPETNTEVDVIAAKRARDFFIGWFVQPLMNGEYPLTMRKNGGPRLPKFTPNETELLTGSYDFIGLNYYTAKTVKDDPVMLTVEPRNYYTDQGLISSYLGNIDPYQGHPFFNTPWGLHDVLQQFKQVYGNPPVYIHENGEVGDHDADYDKLINDIPRVEYLQGHIRAVLDAVRNGSNVKGYFVWSFLDMYELMYGTKFTFGLYYIDFNDPKLTRHPKLSQKWYSRFLKGEKASTKASIHTPNEAETHTYFY.

Residues 1-30 (MNMSCKFEIVLLVSWWLLLVLVFGVESSMF) form the signal peptide. Asn-2 is a glycosylation site (N-linked (GlcNAc...) asparagine). Residues Gln-52, His-150, and 196–197 (NE) each bind a beta-D-glucoside. Glu-197 functions as the Proton donor in the catalytic mechanism. N-linked (GlcNAc...) asparagine glycosylation occurs at Asn-303. 2 residues coordinate a beta-D-glucoside: Tyr-320 and Glu-388. The active-site Nucleophile is the Glu-388. Asn-425 carries N-linked (GlcNAc...) asparagine glycosylation. Positions 435 and 451 each coordinate a beta-D-glucoside.

This sequence belongs to the glycosyl hydrolase 1 family. In terms of tissue distribution, expressed in petals.

Its subcellular location is the vacuole. It catalyses the reaction cyanidin 3-O-beta-D-glucoside + 1-O-(trans-sinapoyl)-beta-D-glucose = cyanidin 3,5-di-O-beta-D-glucoside + (E)-sinapate. Its pathway is pigment biosynthesis; anthocyanin biosynthesis. In terms of biological role, beta-glycosidase that catalyzes the transfer of glucose moiety to anthocyanidin 3-glucoside at the 5 position. Anthocyanins are ubiquitous colored pigments that are responsible for variations in petal color. Uses acyl-glucoses, but not UDP-glucose, as the glucose donor. The sequence is that of Cyanidin 3-O-glucoside 5-O-glucosyltransferase (acyl-glucose) (AA5GT) from Dianthus caryophyllus (Carnation).